Consider the following 500-residue polypeptide: Ferulic acid decarboxylase 1 (500 aa).

Residues asparagine 168, histidine 191, and glutamate 233 each coordinate Mn(2+). Prenylated FMN-binding positions include 168–173, 190–191, and glutamate 233; these read NWSIAR and QH. Residue glutamate 282 is the Proton donor of the active site. Lysine 391 is a binding site for prenylated FMN.

This sequence belongs to the UbiD family. UbiD-like/FDC subfamily. In terms of assembly, homodimer. May form higher order oligomers. Mn(2+) serves as cofactor. It depends on prenylated FMN as a cofactor.

The protein resides in the cytoplasm. It catalyses the reaction (E)-4-coumarate + H(+) = 4-vinylphenol + CO2. The catalysed reaction is (E)-cinnamate + H(+) = styrene + CO2. The enzyme catalyses (E)-ferulate + H(+) = 2-methoxy-4-vinylphenol + CO2. In terms of biological role, catalyzes the reversible decarboxylation of aromatic carboxylic acids like ferulic acid, p-coumaric acid or cinnamic acid, producing the corresponding vinyl derivatives 4-vinylphenol, 4-vinylguaiacol, and styrene, respectively, which play the role of aroma metabolites. The polypeptide is Ferulic acid decarboxylase 1 (Aspergillus niger (strain ATCC MYA-4892 / CBS 513.88 / FGSC A1513)).